The primary structure comprises 185 residues: TATA-box-binding protein 3 (185 aa).

2 repeat units span residues 7 to 84 (IENV…ANTL) and 100 to 178 (VQNI…KTEF).

This sequence belongs to the TBP family.

Its function is as follows. General factor that plays a role in the activation of archaeal genes transcribed by RNA polymerase. Binds specifically to the TATA box promoter element which lies close to the position of transcription initiation. This Methanosarcina mazei (strain ATCC BAA-159 / DSM 3647 / Goe1 / Go1 / JCM 11833 / OCM 88) (Methanosarcina frisia) protein is TATA-box-binding protein 3.